The primary structure comprises 129 residues: D-ribose pyranase (129 aa).

The Proton donor role is filled by histidine 20. Substrate is bound by residues aspartate 28, histidine 96, and 118-120 (YAN).

The protein belongs to the RbsD / FucU family. RbsD subfamily. Homodecamer.

The protein resides in the cytoplasm. It catalyses the reaction beta-D-ribopyranose = beta-D-ribofuranose. The protein operates within carbohydrate metabolism; D-ribose degradation; D-ribose 5-phosphate from beta-D-ribopyranose: step 1/2. Catalyzes the interconversion of beta-pyran and beta-furan forms of D-ribose. This chain is D-ribose pyranase, found in Staphylococcus saprophyticus subsp. saprophyticus (strain ATCC 15305 / DSM 20229 / NCIMB 8711 / NCTC 7292 / S-41).